The sequence spans 222 residues: CEACAM1-like protein UL7 (222 aa).

N-linked (GlcNAc...) asparagine; by host glycans are attached at residues asparagine 50, asparagine 56, asparagine 60, asparagine 71, asparagine 105, asparagine 109, asparagine 125, asparagine 132, asparagine 147, asparagine 164, asparagine 168, and asparagine 189. Residues 193-213 form a helical membrane-spanning segment; the sequence is LALVGVIVFIALIVVCIMGWW.

This sequence belongs to the RL11 family. Interacts with host FLT3. In terms of processing, highly glycosylated.

The protein localises to the secreted. The protein resides in the host cell membrane. Its function is as follows. Plays a role in modulating the host immune response and affecting host cytokine production. Structurally and functionally homolog of host CEACAM1, induces endothelial cell angiogenesis. Ligands for host FLT3 receptor, activates the PI3K/AKT and MAPK/ERK pathways. In turn, triggers hematopoietic progenitor cell and monocyte differentiation leading to virus reactivation. In Human cytomegalovirus (strain AD169) (HHV-5), this protein is CEACAM1-like protein UL7 (UL7).